Here is a 445-residue protein sequence, read N- to C-terminus: tRNA modification GTPase MnmE (445 aa).

The (6S)-5-formyl-5,6,7,8-tetrahydrofolate site is built by Arg20, Glu79, and Lys119. Residues 215-371 form the TrmE-type G domain; the sequence is GLKLAIIGPP…ILKNIEEIAE (157 aa). Asn225 provides a ligand contact to K(+). GTP-binding positions include 225-230, 244-250, and 269-272; these read NAGKSS, SNIAGTT, and DTAG. Ser229 contacts Mg(2+). K(+)-binding residues include Ser244, Ile246, and Thr249. Residue Thr250 participates in Mg(2+) binding. Lys445 contributes to the (6S)-5-formyl-5,6,7,8-tetrahydrofolate binding site.

Belongs to the TRAFAC class TrmE-Era-EngA-EngB-Septin-like GTPase superfamily. TrmE GTPase family. Homodimer. Heterotetramer of two MnmE and two MnmG subunits. The cofactor is K(+).

It is found in the cytoplasm. Functionally, exhibits a very high intrinsic GTPase hydrolysis rate. Involved in the addition of a carboxymethylaminomethyl (cmnm) group at the wobble position (U34) of certain tRNAs, forming tRNA-cmnm(5)s(2)U34. The sequence is that of tRNA modification GTPase MnmE from Rickettsia bellii (strain RML369-C).